The chain runs to 194 residues: RNA polymerase II subunit A C-terminal domain phosphatase SSU72 like protein 1 (194 aa).

It belongs to the SSU72 phosphatase family.

Its subcellular location is the nucleus. It catalyses the reaction O-phospho-L-seryl-[protein] + H2O = L-seryl-[protein] + phosphate. It carries out the reaction O-phospho-L-threonyl-[protein] + H2O = L-threonyl-[protein] + phosphate. Its function is as follows. Protein phosphatase that catalyzes the dephosphorylation of the C-terminal domain of RNA polymerase II. Plays a role in RNA processing and termination. This Homo sapiens (Human) protein is RNA polymerase II subunit A C-terminal domain phosphatase SSU72 like protein 1.